We begin with the raw amino-acid sequence, 945 residues long: Isoleucine--tRNA ligase (945 aa).

A 'HIGH' region motif is present at residues 66 to 76; the sequence is PYANGDIHLGH. Glutamate 581 contributes to the L-isoleucyl-5'-AMP binding site. The 'KMSKS' region motif lies at 622-626; sequence KMSKS. Lysine 625 is an ATP binding site. Cysteine 908, cysteine 911, cysteine 928, and cysteine 931 together coordinate Zn(2+).

Belongs to the class-I aminoacyl-tRNA synthetase family. IleS type 1 subfamily. In terms of assembly, monomer. The cofactor is Zn(2+).

The protein localises to the cytoplasm. The catalysed reaction is tRNA(Ile) + L-isoleucine + ATP = L-isoleucyl-tRNA(Ile) + AMP + diphosphate. Functionally, catalyzes the attachment of isoleucine to tRNA(Ile). As IleRS can inadvertently accommodate and process structurally similar amino acids such as valine, to avoid such errors it has two additional distinct tRNA(Ile)-dependent editing activities. One activity is designated as 'pretransfer' editing and involves the hydrolysis of activated Val-AMP. The other activity is designated 'posttransfer' editing and involves deacylation of mischarged Val-tRNA(Ile). The chain is Isoleucine--tRNA ligase from Burkholderia ambifaria (strain ATCC BAA-244 / DSM 16087 / CCUG 44356 / LMG 19182 / AMMD) (Burkholderia cepacia (strain AMMD)).